A 330-amino-acid chain; its full sequence is Glycine betaine/proline betaine-binding periplasmic protein (330 aa).

An N-terminal signal peptide occupies residues Met1–Ala21. Residues Trp86, His90, and Trp161 to Cys163 contribute to the substrate site. Cys157 and Cys163 form a disulfide bridge.

As to quaternary structure, the complex is composed of two ATP-binding proteins (ProV), two transmembrane proteins (ProW) and a solute-binding protein (ProX).

Its subcellular location is the periplasm. Its function is as follows. Part of the ProU ABC transporter complex involved in glycine betaine and proline betaine uptake. Binds glycine betaine and proline betaine with high affinity. In Escherichia coli (strain K12), this protein is Glycine betaine/proline betaine-binding periplasmic protein.